The sequence spans 214 residues: Pyridoxine/pyridoxamine 5'-phosphate oxidase (214 aa).

Substrate-binding positions include 9–12 and Lys67; that span reads RREY. Residues 62 to 67, 77 to 78, Arg83, Lys84, and Gln106 each bind FMN; these read RTVLLK and YS. Substrate-binding residues include Tyr124, Arg128, and Ser132. Residues 141 to 142 and Trp186 contribute to the FMN site; that span reads QS. 192–194 lines the substrate pocket; it reads RLH. Arg196 is a binding site for FMN.

The protein belongs to the pyridoxamine 5'-phosphate oxidase family. In terms of assembly, homodimer. Requires FMN as cofactor.

It carries out the reaction pyridoxamine 5'-phosphate + O2 + H2O = pyridoxal 5'-phosphate + H2O2 + NH4(+). It catalyses the reaction pyridoxine 5'-phosphate + O2 = pyridoxal 5'-phosphate + H2O2. Its pathway is cofactor metabolism; pyridoxal 5'-phosphate salvage; pyridoxal 5'-phosphate from pyridoxamine 5'-phosphate: step 1/1. It functions in the pathway cofactor metabolism; pyridoxal 5'-phosphate salvage; pyridoxal 5'-phosphate from pyridoxine 5'-phosphate: step 1/1. In terms of biological role, catalyzes the oxidation of either pyridoxine 5'-phosphate (PNP) or pyridoxamine 5'-phosphate (PMP) into pyridoxal 5'-phosphate (PLP). The protein is Pyridoxine/pyridoxamine 5'-phosphate oxidase of Porphyromonas gingivalis (strain ATCC 33277 / DSM 20709 / CIP 103683 / JCM 12257 / NCTC 11834 / 2561).